Here is a 437-residue protein sequence, read N- to C-terminus: Acyl-coenzyme A thioesterase 2, chloroplastic (437 aa).

Residues 1–13 (MDLSSSPNHPITV) constitute a chloroplast transit peptide. HotDog ACOT-type domains follow at residues 89–211 (ILYN…RDSK) and 287–404 (RDTR…RPEA).

Belongs to the acyl coenzyme A hydrolase family. Mostly expressed at low levels in glandular trichomes (lupulin glands), and, to a lower extent, in stems, leaves, flowers and cones.

It localises to the plastid. It is found in the chloroplast. Acyl-CoA thioesterases are a group of enzymes that catalyze the hydrolysis of acyl-CoAs to the free fatty acid and coenzyme A (CoASH), providing the potential to regulate intracellular levels of acyl-CoAs, free fatty acids and CoASH. In Humulus lupulus (European hop), this protein is Acyl-coenzyme A thioesterase 2, chloroplastic.